The sequence spans 90 residues: Putative sodium channel toxin Ts28 (90 aa).

A signal peptide spans 1-23 (MKISLVTWLITALCLMEIEEIDG). An LCN-type CS-alpha/beta domain is found at 26–86 (PGNYPVDFQG…FWDVMKKQCD (61 aa)). 3 disulfides stabilise this stretch: Cys-40/Cys-60, Cys-46/Cys-65, and Cys-50/Cys-67.

It belongs to the long (3 C-C) scorpion toxin superfamily. In terms of assembly, monomer (edited version) and heterodimer (non-edited version) of this alpha chain and a beta chain (AC P0CI43). Expressed by the venom gland.

The protein resides in the secreted. The edited BmKBTx-like may modulate voltage-gated sodium channels (Nav). Functionally, the non-edited form is able to form a heterodimer. In orthologs, a heterodimer with LVP beta-chain induces lipolysis in rat adipocytes, which is mediated through the beta-2 adrenergic receptor pathway (ADRB2). Since no LVP beta-chains have been identified in the venom of this scorpion, it is possible that this protein is not involved in a lipolysis process. In Tityus serrulatus (Brazilian scorpion), this protein is Putative sodium channel toxin Ts28.